We begin with the raw amino-acid sequence, 1207 residues long: ATP-dependent helicase/nuclease subunit A (1207 aa).

The 471-residue stretch at Pro-2 to Thr-472 folds into the UvrD-like helicase ATP-binding domain. Residue Ala-23–Thr-30 participates in ATP binding. In terms of domain architecture, UvrD-like helicase C-terminal spans Gly-492–Gly-783.

This sequence belongs to the helicase family. AddA subfamily. In terms of assembly, heterodimer of AddA and AddB/RexB. Mg(2+) serves as cofactor.

The catalysed reaction is Couples ATP hydrolysis with the unwinding of duplex DNA by translocating in the 3'-5' direction.. It catalyses the reaction ATP + H2O = ADP + phosphate + H(+). Functionally, the heterodimer acts as both an ATP-dependent DNA helicase and an ATP-dependent, dual-direction single-stranded exonuclease. Recognizes the chi site generating a DNA molecule suitable for the initiation of homologous recombination. The AddA nuclease domain is required for chi fragment generation; this subunit has the helicase and 3' -&gt; 5' nuclease activities. In Lactobacillus acidophilus (strain ATCC 700396 / NCK56 / N2 / NCFM), this protein is ATP-dependent helicase/nuclease subunit A.